The following is a 428-amino-acid chain: 5-methylthioadenosine/S-adenosylhomocysteine deaminase (428 aa).

2 residues coordinate Zn(2+): His-65 and His-67. Positions 94, 158, and 184 each coordinate substrate. His-211 serves as a coordination point for Zn(2+). Residues Glu-214 and Asp-299 each contribute to the substrate site. Asp-299 contributes to the Zn(2+) binding site.

Belongs to the metallo-dependent hydrolases superfamily. MTA/SAH deaminase family. The cofactor is Zn(2+).

It catalyses the reaction S-adenosyl-L-homocysteine + H2O + H(+) = S-inosyl-L-homocysteine + NH4(+). The enzyme catalyses S-methyl-5'-thioadenosine + H2O + H(+) = S-methyl-5'-thioinosine + NH4(+). In terms of biological role, catalyzes the deamination of 5-methylthioadenosine and S-adenosyl-L-homocysteine into 5-methylthioinosine and S-inosyl-L-homocysteine, respectively. Is also able to deaminate adenosine. The sequence is that of 5-methylthioadenosine/S-adenosylhomocysteine deaminase from Moorella thermoacetica (strain ATCC 39073 / JCM 9320).